The following is a 382-amino-acid chain: MSNRIGPQRSTKTAAKLRLLPSTEEFDDFRRQDTGREVYSQIPQIEGSTAKRDAEHLGKRHREFLPRVTAYCTCDTFRVDLLFKFFQSRRSSHKTRPKQFDECIYSPYSYNNEETTDLLPDTLESSRGTLNRESSQESLQSIFEESGLDRNQPLFREVFCFTYGVVVLWGYTIDEEHRFLRELGRFEIEKLKIEDMEVEEFNYYITTLYQPRIFNDFIALRDASNYMIRLSISHAIAQSVKISLFEELVNETIDATKDTPQMIAETGRVNLKREEIMMAVGQLFILRININLQGSVLDSPELMWTEPQLEPIYTAARSYLEINQRVALLNQRVEVIGDLLSMLKEQITHTHDESLEWIVVILMGLLVLIALFSIVVDWKLFQ.

Phosphoserine is present on S135. The helical transmembrane segment at 356-376 (EWIVVILMGLLVLIALFSIVV) threads the bilayer.

It belongs to the RMD1/sif2 family. Interacts with sad1.

Its subcellular location is the nucleus membrane. In terms of biological role, required for sporulation where it is believed to have a role in meiotic nuclear division. The sequence is that of Sad1-interacting factor 2 (sif2) from Schizosaccharomyces pombe (strain 972 / ATCC 24843) (Fission yeast).